A 59-amino-acid chain; its full sequence is Large ribosomal subunit protein uL30 (59 aa).

It belongs to the universal ribosomal protein uL30 family. Part of the 50S ribosomal subunit.

The protein is Large ribosomal subunit protein uL30 of Herminiimonas arsenicoxydans.